Here is a 342-residue protein sequence, read N- to C-terminus: MIKHIVSPFRTNFVGISKSVLSRMIHHKVTIIGSGPAAHTAAIYLARAEMKPTLYEGMMANGIAAGGQLTTTTDIENFPGFPESLSGSELMERMRKQSAKFGTNIITETVSKVDLSSKPFRLWTEFNEDAEPVTTDAIILATGASAKRMHLPGEETYWQQGISACAVCDGAVPIFRNKPLAVIGGGDSACEEAEFLTKYASKVYILVRKDHFRASVIMQRRIEKNPNIIVLFNTVALEAKGDGKLLNMLRIKNTKSNVENDLEVNGLFYAIGHSPATDIVKGQVDEEETGYIKTVPGSSLTSVPGFFAAGDVQDSRYRQAVTSAGSGCIAALDAERYLSAQE.

The N-terminal 23 residues, 1–23 (MIKHIVSPFRTNFVGISKSVLSR), are a transit peptide targeting the mitochondrion. Residues 34–37 (SGPA), 56–68 (EGMMANGIAAGGQ), 63–64 (IA), Gln-68, Asn-77, Val-110, Cys-168, Asp-311, 311–320 (DVQDSRYRQA), and 318–320 (RQA) each bind FAD. Cys-165 and Cys-168 are joined by a disulfide.

It belongs to the class-II pyridine nucleotide-disulfide oxidoreductase family. Homodimer. FAD is required as a cofactor.

The protein localises to the mitochondrion. The catalysed reaction is [thioredoxin]-dithiol + NADP(+) = [thioredoxin]-disulfide + NADPH + H(+). Acts on mitochondrial thioredoxin 3. Implicated in the defense against oxidative stress. This is Thioredoxin reductase 2, mitochondrial from Saccharomyces cerevisiae (strain ATCC 204508 / S288c) (Baker's yeast).